The primary structure comprises 887 residues: Transportin-2 (887 aa).

20 HEAT repeats span residues 9 to 36, 41 to 79, 88 to 121, 127 to 164, 171 to 201, 214 to 241, 253 to 280, 296 to 386, 394 to 422, 434 to 461, 475 to 508, 516 to 549, 557 to 595, 603 to 654, 665 to 696, 704 to 737, 745 to 780, 788 to 821, 830 to 861, and 864 to 884; these read GLQQ…DKLK, FPDF…AHYQ, FIKQ…KGEL, LLPQ…LDSD, NIMI…QFIM, FIEH…VMLL, HSII…FWLT, VQLI…LANV, HLLP…GAIA, PELI…TLSR, LKPL…EEEA, LSYI…ADSV, EYIQ…TALQ, EPVY…GLGG, IMTL…KACF, AEFM…MQMG, QMVL…YVCP, QQFI…IGVN, IFFC…KDQV, and ENWQ…LAAF. An Importin N-terminal domain is found at 31–99; sequence VQDKLKQLNQ…KQECLNNIGD (69 aa). The segment at 344 to 363 is disordered; sequence TLTHEAERPDSSEDAEDDDD. At K852 the chain carries N6-acetyllysine.

It belongs to the importin beta family. Importin beta-2 subfamily.

Its subcellular location is the cytoplasm. The protein resides in the nucleus. In terms of biological role, probably functions in nuclear protein import as nuclear transport receptor. Serves as receptor for nuclear localization signals (NLS) in cargo substrates. Is thought to mediate docking of the importin/substrate complex to the nuclear pore complex (NPC) through binding to nucleoporin and the complex is subsequently translocated through the pore by an energy requiring, Ran-dependent mechanism. At the nucleoplasmic side of the NPC, Ran binds to the importin, the importin/substrate complex dissociates and importin is re-exported from the nucleus to the cytoplasm where GTP hydrolysis releases Ran. The directionality of nuclear import is thought to be conferred by an asymmetric distribution of the GTP- and GDP-bound forms of Ran between the cytoplasm and nucleus. The polypeptide is Transportin-2 (Tnpo2) (Mus musculus (Mouse)).